We begin with the raw amino-acid sequence, 133 residues long: Ribosome-binding factor A (133 aa).

Belongs to the RbfA family. As to quaternary structure, monomer. Binds 30S ribosomal subunits, but not 50S ribosomal subunits or 70S ribosomes.

Its subcellular location is the cytoplasm. Its function is as follows. One of several proteins that assist in the late maturation steps of the functional core of the 30S ribosomal subunit. Associates with free 30S ribosomal subunits (but not with 30S subunits that are part of 70S ribosomes or polysomes). Required for efficient processing of 16S rRNA. May interact with the 5'-terminal helix region of 16S rRNA. The protein is Ribosome-binding factor A of Acinetobacter baylyi (strain ATCC 33305 / BD413 / ADP1).